Consider the following 569-residue polypeptide: Linoleate hydratase (569 aa).

Residue Tyr87 coordinates FAD. Tyr205 acts as the Proton donor in catalysis. FAD is bound by residues Val254, Ser300, and Thr524.

It belongs to the oleate hydratase family. FAD is required as a cofactor.

The protein resides in the cell membrane. It is found in the cytoplasm. It carries out the reaction (9Z,12Z)-octadecadienoate + H2O = (10S)-hydroxy-(12Z)-octadecenoate. The enzyme catalyses (10E,12Z)-octadecadienoate + H2O = (10S)-hydroxy-(12Z)-octadecenoate. It catalyses the reaction (9Z)-octadecenoate + H2O = 10-hydroxyoctadecanoate. The catalysed reaction is (10E)-octadecenoate + H2O = 10-hydroxyoctadecanoate. It carries out the reaction (9E,11E)-octadecadienoate + H2O = 10-hydroxy-(11E)-octadecenoate. The enzyme catalyses (9Z,11E)-octadecadienoate + H2O = 10-hydroxy-(11E)-octadecenoate. It catalyses the reaction (9Z)-hexadecenoate + H2O = 10-hydroxyhexadecanoate. The catalysed reaction is (9Z,12Z,15Z)-octadecatrienoate + H2O = (10S)-hydroxy-(12Z,15Z)-octadecadienoate. It carries out the reaction (6Z,9Z,12Z)-octadecatrienoate + H2O = (10S)-hydroxy-(6Z,12Z)-octadecadienoate. The enzyme catalyses (6Z,9Z,12Z,15Z)-octadecatetraenoate + H2O = (10S)-hydroxy-(6Z,12Z,15Z)-octadecatrienoate. The protein operates within lipid metabolism; fatty acid metabolism. Its activity is regulated as follows. The addition of NADH or NADPH highly increases catalytic activity, likely by reducing the cofactor FAD to FADH2. The hydration and dehydration reactions are strongly inhibited by Ag(+), Fe(2+), Cu(2+), Zn(2+), Hg(2+), and Fe(3+). Is involved in a saturation metabolic pathway of polyunsaturated fatty acids, that detoxifies unsaturated fatty acids and generates hydroxy fatty acids, oxo fatty acids, conjugated fatty acids such as conjugated linoleic acids (CLAs), and partially saturated trans-fatty acids as intermediates. CLA-HY catalyzes the hydration and dehydration steps in the production of 10-hydroxy-cis-12-octadecenoate, trans-10,cis-12-CLA, cis-9,trans-11-CLA, trans-9,trans-11-CLA, oleate and trans-10-octadecenoate during linoleate metabolism. Is also able to hydrate palmitoleic acid (cis-9-hexadecenoic acid), oleic acid, alpha-linolenic acid, gamma-linolenic acid, and stearidonic acid into the corresponding 10-hydroxy fatty acids, and dehydrate 10-hydroxy-cis-12,cis-15-octadecadienoic acid, 10-hydroxy-cis-6,cis-12-octadecadienoic acid, and 10-hydroxyoctadecanoic acid into the corresponding fatty acids with cis double bonds at the Delta9 position. As part of the gut microbiome, this enzyme modifies host fatty acid composition and is expected to improve human health by altering lipid metabolism related to the onset of metabolic syndrome. Shows regioselectivity for Delta9 double bond hydration, generating C10 hydroxy groups in the (S)-configuration with high enantioselectivity, when another double bond is in position 12. Is not able to hydrate fatty acids with a trans carbon-carbon double bond at Delta9 position (elaidic acid, trans-9-octadecenoic acid), fatty acid esters (methyl linoleate, monolinolein, dilinolein, and trilinolein), and conjugated fatty acids (conjugated linoleic acids), as well as fatty acids with other chain lengths, such as myristoleic acid (cis-9-tetradecenoic acid), arachidonic acid (cis-5,cis-8,cis-11,cis-14-eicosatetraenoic acid), EPA (cis-5,cis-8,cis-11,cis-14,cis-17-eicosapentaenoic acid), DHA (cis-4,cis-7,cis-10,cis-13,cis-16,cis-19-docosahexaenoic acid) and fatty acids with a cis carbon-carbon double bond at Delta11 position, such as cis-vaccenic acid and cis-11-octadecenoic acid, or fatty alcohols, such as linoleyl alcohol. Is not able to dehydrate 12-hydroxy, 3-hydroxy, and 9-hydroxy fatty acids. The polypeptide is Linoleate hydratase (Lactiplantibacillus plantarum (Lactobacillus plantarum)).